The sequence spans 652 residues: DNA ligase (652 aa).

Residues 29 to 33 (DSEYD), 78 to 79 (SL), and Glu-107 contribute to the NAD(+) site. Catalysis depends on Lys-109, which acts as the N6-AMP-lysine intermediate. Residues Arg-130, Glu-164, Lys-278, and Lys-302 each contribute to the NAD(+) site. Zn(2+)-binding residues include Cys-395, Cys-398, Cys-413, and Cys-418. The BRCT domain maps to 577–652 (VADAALSGLT…VRDEAWLESL (76 aa)).

This sequence belongs to the NAD-dependent DNA ligase family. LigA subfamily. Requires Mg(2+) as cofactor. Mn(2+) serves as cofactor.

It carries out the reaction NAD(+) + (deoxyribonucleotide)n-3'-hydroxyl + 5'-phospho-(deoxyribonucleotide)m = (deoxyribonucleotide)n+m + AMP + beta-nicotinamide D-nucleotide.. Its function is as follows. DNA ligase that catalyzes the formation of phosphodiester linkages between 5'-phosphoryl and 3'-hydroxyl groups in double-stranded DNA using NAD as a coenzyme and as the energy source for the reaction. It is essential for DNA replication and repair of damaged DNA. This is DNA ligase from Streptococcus pneumoniae (strain 70585).